A 269-amino-acid chain; its full sequence is Iron(3+)-hydroxamate import ATP-binding protein FhuC (269 aa).

An ABC transporter domain is found at 4–240; sequence LSTEQLGIGY…DILKQVFQID (237 aa). Residues 36–43 and 160–171 each bind ATP; these read GPNGCGKS and LLLLDEPTTYLD.

Belongs to the ABC transporter superfamily. Iron (Fe3+)-hydroxamate importer (TC 3.A.1.14.7) family. In terms of assembly, the complex is composed of an ATP-binding protein (FhuC), two transmembrane proteins (FhuB and FhuG) and a solute-binding protein (FhuD or YxeB).

The protein localises to the cell membrane. It catalyses the reaction ATP + H2O + Fe(3+)-hydroxamate complex-[hydroxamate-binding protein]Side 1 = ADP + phosphate + Fe(3+)-hydroxamate complexSide 2 + [hydroxamate-binding protein]Side 1.. In terms of biological role, part of the ABC transporter complex FhuBGCD involved in iron(3+)-hydroxamate import. Responsible for energy coupling to the transport system. The chain is Iron(3+)-hydroxamate import ATP-binding protein FhuC (fhuC) from Bacillus subtilis (strain 168).